A 274-amino-acid polypeptide reads, in one-letter code: uncharacterized protein (274 aa).

Residues 238-258 (ILSVQVIFATVIALIAISVFC) form a helical membrane-spanning segment.

The protein resides in the membrane. This is an uncharacterized protein from Schizosaccharomyces pombe (strain 972 / ATCC 24843) (Fission yeast).